A 255-amino-acid polypeptide reads, in one-letter code: Acetylglutamate kinase (255 aa).

Substrate-binding positions include glycine 40 to glycine 41, arginine 62, and asparagine 153.

It belongs to the acetylglutamate kinase family. ArgB subfamily.

It is found in the cytoplasm. The enzyme catalyses N-acetyl-L-glutamate + ATP = N-acetyl-L-glutamyl 5-phosphate + ADP. Its pathway is amino-acid biosynthesis; L-arginine biosynthesis; N(2)-acetyl-L-ornithine from L-glutamate: step 2/4. Catalyzes the ATP-dependent phosphorylation of N-acetyl-L-glutamate. The chain is Acetylglutamate kinase from Bacillus cereus (strain AH820).